The primary structure comprises 161 residues: Lipoprotein LpqH (161 aa).

Residues 1 to 21 form the signal peptide; the sequence is MNRQLRFAVAGPEILAAVVSG. Low complexity predominate over residues 21–46; the sequence is GCSSGNKSAPSSSASSSSTSPSASSG. A disordered region spans residues 21-49; sequence GCSSGNKSAPSSSASSSSTSPSASSGGAA. Cysteine 22 carries the N-palmitoyl cysteine lipid modification. Cysteine 22 is lipidated: S-diacylglycerol cysteine.

It belongs to the mycobacterial 19 kDa antigen family. Post-translationally, modified by Lgt on Cys-22 with an S-linked diacylglycerol with a mixture of C16, C18 and C19 fatty acids, signal peptide is removed by LspA, modifed by Lnt with an amide-linked mixture of C16 and C19 fatty acids.

The protein localises to the cell membrane. In terms of biological role, might be involved in ligand transport. A host TLR2 agonist, modifies host gene expression in response to pathogen. The sequence is that of Lipoprotein LpqH (lpqH) from Mycobacterium avium.